The chain runs to 293 residues: Ribosomal protein L11 methyltransferase (293 aa).

The S-adenosyl-L-methionine site is built by threonine 145, glycine 166, aspartate 188, and asparagine 230.

The protein belongs to the methyltransferase superfamily. PrmA family.

The protein localises to the cytoplasm. It catalyses the reaction L-lysyl-[protein] + 3 S-adenosyl-L-methionine = N(6),N(6),N(6)-trimethyl-L-lysyl-[protein] + 3 S-adenosyl-L-homocysteine + 3 H(+). Functionally, methylates ribosomal protein L11. This Shewanella frigidimarina (strain NCIMB 400) protein is Ribosomal protein L11 methyltransferase.